Reading from the N-terminus, the 571-residue chain is Glutamate--tRNA ligase (571 aa).

Positions proline 106–asparagine 116 match the 'HIGH' region motif.

Belongs to the class-I aminoacyl-tRNA synthetase family. Glutamate--tRNA ligase type 2 subfamily.

The protein resides in the cytoplasm. The catalysed reaction is tRNA(Glu) + L-glutamate + ATP = L-glutamyl-tRNA(Glu) + AMP + diphosphate. In terms of biological role, catalyzes the attachment of glutamate to tRNA(Glu) in a two-step reaction: glutamate is first activated by ATP to form Glu-AMP and then transferred to the acceptor end of tRNA(Glu). The protein is Glutamate--tRNA ligase of Pyrococcus abyssi (strain GE5 / Orsay).